The sequence spans 220 residues: Large ribosomal subunit protein uL10c (220 aa).

The N-terminal 41 residues, 1 to 41 (MEVALLSFSSSLSPLCHQRISTLTPKTSNSPNYPRLPVIRS), are a transit peptide targeting the chloroplast.

This sequence belongs to the universal ribosomal protein uL10 family. In terms of assembly, part of the 50S ribosomal subunit.

It localises to the plastid. The protein resides in the chloroplast. This protein binds directly to 23S ribosomal RNA. This is Large ribosomal subunit protein uL10c (RPL10) from Arabidopsis thaliana (Mouse-ear cress).